The chain runs to 968 residues: RNA polymerase-associated protein RapA (968 aa).

The Helicase ATP-binding domain maps to 164-334 (DVGRRHAPRV…FARLRLLDPN (171 aa)). 177-184 (DEVGLGKT) contacts ATP. The DEAH box signature appears at 280–283 (DEAH). In terms of domain architecture, Helicase C-terminal spans 490–662 (RVEWLMGYLT…YLASPDQTEG (173 aa)).

This sequence belongs to the SNF2/RAD54 helicase family. RapA subfamily. As to quaternary structure, interacts with the RNAP. Has a higher affinity for the core RNAP than for the holoenzyme. Its ATPase activity is stimulated by binding to RNAP.

Its function is as follows. Transcription regulator that activates transcription by stimulating RNA polymerase (RNAP) recycling in case of stress conditions such as supercoiled DNA or high salt concentrations. Probably acts by releasing the RNAP, when it is trapped or immobilized on tightly supercoiled DNA. Does not activate transcription on linear DNA. Probably not involved in DNA repair. This Shigella dysenteriae serotype 1 (strain Sd197) protein is RNA polymerase-associated protein RapA.